A 227-amino-acid polypeptide reads, in one-letter code: Lipoprotein-releasing system ATP-binding protein LolD (227 aa).

Residues Leu6–Arg227 form the ABC transporter domain. Ala43–Ser50 contributes to the ATP binding site.

This sequence belongs to the ABC transporter superfamily. Lipoprotein translocase (TC 3.A.1.125) family. As to quaternary structure, the complex is composed of two ATP-binding proteins (LolD) and two transmembrane proteins (LolC and LolE).

Its subcellular location is the cell inner membrane. Its function is as follows. Part of the ABC transporter complex LolCDE involved in the translocation of mature outer membrane-directed lipoproteins, from the inner membrane to the periplasmic chaperone, LolA. Responsible for the formation of the LolA-lipoprotein complex in an ATP-dependent manner. This chain is Lipoprotein-releasing system ATP-binding protein LolD, found in Ruegeria sp. (strain TM1040) (Silicibacter sp.).